The following is a 254-amino-acid chain: UPF0246 protein FTN_1542 (254 aa).

The protein belongs to the UPF0246 family.

The protein is UPF0246 protein FTN_1542 of Francisella tularensis subsp. novicida (strain U112).